The chain runs to 620 residues: Probable serine/threonine-protein kinase RTK1 (620 aa).

Disordered stretches follow at residues 1–20, 29–130, 153–186, 210–237, and 252–271; these read MVKE…SLFR, AKIF…PVRT, KDAF…SNLS, QAST…KKKS, and HDNH…TKPK. Residues 7 to 18 are compositionally biased toward low complexity; sequence LHSSSSTSLSSL. The segment covering 56–76 has biased composition (basic and acidic residues); the sequence is KNTDSDQEDQIKYNKPNDRRS. Threonine 58 is modified (phosphothreonine). Serine 60 bears the Phosphoserine mark. 3 stretches are compositionally biased toward polar residues: residues 95–107, 165–186, and 210–222; these read VASS…SPTS, TAHS…SNLS, and QAST…LQHN. The residue at position 216 (serine 216) is a Phosphoserine. Over residues 254–263 the composition is skewed to basic residues; it reads NHHHHHHHNR. The region spanning 302 to 575 is the Protein kinase domain; the sequence is GIPGRKLGEG…MNDVVKDDWL (274 aa). ATP contacts are provided by residues 308–316 and lysine 330; that span reads LGEGASGSV. A Glycyl lysine isopeptide (Lys-Gly) (interchain with G-Cter in ubiquitin) cross-link involves residue lysine 334. The active-site Proton acceptor is aspartate 430.

Belongs to the protein kinase superfamily. Ser/Thr protein kinase family. Interacts with ribosome biogenesis factors ARC1, CKA2 and GUS1.

It carries out the reaction L-seryl-[protein] + ATP = O-phospho-L-seryl-[protein] + ADP + H(+). The enzyme catalyses L-threonyl-[protein] + ATP = O-phospho-L-threonyl-[protein] + ADP + H(+). Functionally, probable serine/threonine-protein kinase that may be involved in ribosome biogenesis. The protein is Probable serine/threonine-protein kinase RTK1 (RTK1) of Saccharomyces cerevisiae (strain ATCC 204508 / S288c) (Baker's yeast).